The sequence spans 311 residues: Olfactory receptor 52J3 (311 aa).

Residues 1-27 (MFYHNKSIFHPVTFFLIGIPGLEDFHM) are Extracellular-facing. Asn-5 carries an N-linked (GlcNAc...) asparagine glycan. Residues 28-48 (WISGPFCSVYLVALLGNATIL) form a helical membrane-spanning segment. The Cytoplasmic segment spans residues 49-56 (LVIKVEQT). Residues 57 to 77 (LREPMFYFLAILSTIDLALST) form a helical membrane-spanning segment. Residues 78–101 (TSVPRMLGIFWFDAHEINYGACVA) are Extracellular-facing. Cys-99 and Cys-191 are oxidised to a cystine. Residues 102 to 122 (QMFLIHAFTGMEAEVLLAMAF) form a helical membrane-spanning segment. Topologically, residues 123–141 (DRYVAVCAPLHYATILTSQ) are cytoplasmic. A helical transmembrane segment spans residues 142-162 (VLVGISMCIVIRPVLLTLPMV). Topologically, residues 163 to 198 (YLIYRLPFCQAHIIAHSYCEHMGIAKLSCGNIRING) are extracellular. Residues 199–218 (IYGLFVVSFFVLNLVLIGIS) traverse the membrane as a helical segment. At 219–238 (YVYILRAVFRLPSHDAQLKA) the chain is on the cytoplasmic side. The chain crosses the membrane as a helical span at residues 239 to 259 (LSTCGAHVGVICVFYIPSVFS). The Extracellular segment spans residues 260-274 (FLTHRFGHQIPGYIH). The helical transmembrane segment at 275-295 (ILVANLYLIIPPSLNPIIYGV) threads the bilayer. Topologically, residues 296-311 (RTKQIRERVLYVFTKK) are cytoplasmic.

Belongs to the G-protein coupled receptor 1 family.

The protein localises to the cell membrane. Odorant receptor. The chain is Olfactory receptor 52J3 (OR52J3) from Homo sapiens (Human).